A 250-amino-acid chain; its full sequence is DNA repair protein RecO (250 aa).

It belongs to the RecO family.

Its function is as follows. Involved in DNA repair and RecF pathway recombination. The protein is DNA repair protein RecO of Staphylococcus aureus (strain MRSA252).